The primary structure comprises 159 residues: Keratin-associated protein 6-2 (159 aa).

The tract at residues 11–147 is 66 X 2 AA repeats of G-[YCGS]; it reads GYGCGYGSGY…SYYRSGCCGY (137 aa).

The protein belongs to the KRTAP type 6 family. As to quaternary structure, interacts with hair keratins. As to expression, expressed in skin during two hair growth cycles. Expression restricted to the cortical cells of hair follicles, appearing first in the cortical cells processing the flat nuclei located a few cells above the dermal papilla.

In the hair cortex, hair keratin intermediate filaments are embedded in an interfilamentous matrix, consisting of hair keratin-associated proteins (KRTAP), which are essential for the formation of a rigid and resistant hair shaft through their extensive disulfide bond cross-linking with abundant cysteine residues of hair keratins. The matrix proteins include the high-sulfur and high-glycine-tyrosine keratins. The polypeptide is Keratin-associated protein 6-2 (Mus musculus (Mouse)).